We begin with the raw amino-acid sequence, 418 residues long: Serine hydroxymethyltransferase 2 (418 aa).

Residues Leu-121 and Gly-125 to Leu-127 contribute to the (6S)-5,6,7,8-tetrahydrofolate site. The residue at position 230 (Lys-230) is an N6-(pyridoxal phosphate)lysine. Ser-355–Phe-357 lines the (6S)-5,6,7,8-tetrahydrofolate pocket.

This sequence belongs to the SHMT family. Homodimer. Pyridoxal 5'-phosphate serves as cofactor.

Its subcellular location is the cytoplasm. The catalysed reaction is (6R)-5,10-methylene-5,6,7,8-tetrahydrofolate + glycine + H2O = (6S)-5,6,7,8-tetrahydrofolate + L-serine. Its pathway is one-carbon metabolism; tetrahydrofolate interconversion. It participates in amino-acid biosynthesis; glycine biosynthesis; glycine from L-serine: step 1/1. Catalyzes the reversible interconversion of serine and glycine with tetrahydrofolate (THF) serving as the one-carbon carrier. This reaction serves as the major source of one-carbon groups required for the biosynthesis of purines, thymidylate, methionine, and other important biomolecules. Also exhibits THF-independent aldolase activity toward beta-hydroxyamino acids, producing glycine and aldehydes, via a retro-aldol mechanism. The polypeptide is Serine hydroxymethyltransferase 2 (Pseudomonas aeruginosa (strain ATCC 15692 / DSM 22644 / CIP 104116 / JCM 14847 / LMG 12228 / 1C / PRS 101 / PAO1)).